The sequence spans 87 residues: uncharacterized protein (87 aa).

It to A.fulgidus AF_0255 and AF_1348.

This is an uncharacterized protein from Archaeoglobus fulgidus (strain ATCC 49558 / DSM 4304 / JCM 9628 / NBRC 100126 / VC-16).